Consider the following 499-residue polypeptide: Fumarate hydratase 2 (499 aa).

A disordered region spans residues 19-51; that stretch reads ADVTLKQEDEQQERRSYSTPFREERDTFGPIQV. Basic and acidic residues predominate over residues 23–45; the sequence is LKQEDEQQERRSYSTPFREERDT. Substrate is bound by residues 134 to 136, 164 to 167, 174 to 176, and threonine 222; these read SGT, HPND, and SSN. Histidine 223 (proton donor/acceptor) is an active-site residue. Serine 353 is an active-site residue. Residues serine 354 and 359-361 contribute to the substrate site; that span reads KVN.

The protein belongs to the class-II fumarase/aspartase family. Fumarase subfamily. In terms of assembly, homotetramer.

Its subcellular location is the cytoplasm. It is found in the cytosol. It carries out the reaction (S)-malate = fumarate + H2O. Fumarate hydratase activity (fumarate to L-malate) is strongly inhibited by phosphoenolpyruvate, citrate, oxaloacetate, ATP and ADP. Malate dehydratase activity (malate to fumarate) is activated by oxaloacetate, Asn and Gln. Malate dehydratase activity (malate to fumarate) is inhibited by citrate, succinate, ADP and ATP. Its function is as follows. Cytosolic fumarate hydratase that catalyzes the reversible stereospecific interconversion of fumarate to L-malate. Catalyzes the dehydration of L-malate to fumarate in the cytosol: required for the massive fumarate accumulation during the day in plants grown under high nitrogen. Also required for acclimation of photosynthesis to cold: acts by mediating accumulation of fumarate at low temperature, leading to reduce accumulation of phosphorylated sugars. In Arabidopsis thaliana (Mouse-ear cress), this protein is Fumarate hydratase 2.